Reading from the N-terminus, the 305-residue chain is UDP-3-O-acyl-N-acetylglucosamine deacetylase (305 aa).

Positions 78, 237, and 241 each coordinate Zn(2+). Catalysis depends on H264, which acts as the Proton donor.

Belongs to the LpxC family. Zn(2+) is required as a cofactor.

It carries out the reaction a UDP-3-O-[(3R)-3-hydroxyacyl]-N-acetyl-alpha-D-glucosamine + H2O = a UDP-3-O-[(3R)-3-hydroxyacyl]-alpha-D-glucosamine + acetate. Its pathway is glycolipid biosynthesis; lipid IV(A) biosynthesis; lipid IV(A) from (3R)-3-hydroxytetradecanoyl-[acyl-carrier-protein] and UDP-N-acetyl-alpha-D-glucosamine: step 2/6. Functionally, catalyzes the hydrolysis of UDP-3-O-myristoyl-N-acetylglucosamine to form UDP-3-O-myristoylglucosamine and acetate, the committed step in lipid A biosynthesis. This chain is UDP-3-O-acyl-N-acetylglucosamine deacetylase, found in Paraburkholderia phymatum (strain DSM 17167 / CIP 108236 / LMG 21445 / STM815) (Burkholderia phymatum).